The following is a 135-amino-acid chain: uncharacterized protein (135 aa).

Residues 4 to 24 (LGVFLILASIVCGVVAICGCT) traverse the membrane as a helical segment.

The protein resides in the membrane. This is an uncharacterized protein from Methanocaldococcus jannaschii (strain ATCC 43067 / DSM 2661 / JAL-1 / JCM 10045 / NBRC 100440) (Methanococcus jannaschii).